Here is a 414-residue protein sequence, read N- to C-terminus: Esterase FrsA (414 aa).

Belongs to the FrsA family.

It catalyses the reaction a carboxylic ester + H2O = an alcohol + a carboxylate + H(+). Functionally, catalyzes the hydrolysis of esters. This is Esterase FrsA from Shigella sonnei (strain Ss046).